Reading from the N-terminus, the 134-residue chain is Phosphoribosyl-AMP cyclohydrolase (134 aa).

Residue Asp80 coordinates Mg(2+). Position 81 (Cys81) interacts with Zn(2+). Mg(2+) is bound by residues Asp82 and Asp84. Positions 98 and 105 each coordinate Zn(2+).

It belongs to the PRA-CH family. As to quaternary structure, homodimer. The cofactor is Mg(2+). Requires Zn(2+) as cofactor.

It is found in the cytoplasm. The catalysed reaction is 1-(5-phospho-beta-D-ribosyl)-5'-AMP + H2O = 1-(5-phospho-beta-D-ribosyl)-5-[(5-phospho-beta-D-ribosylamino)methylideneamino]imidazole-4-carboxamide. It functions in the pathway amino-acid biosynthesis; L-histidine biosynthesis; L-histidine from 5-phospho-alpha-D-ribose 1-diphosphate: step 3/9. Catalyzes the hydrolysis of the adenine ring of phosphoribosyl-AMP. The sequence is that of Phosphoribosyl-AMP cyclohydrolase from Bordetella petrii (strain ATCC BAA-461 / DSM 12804 / CCUG 43448).